Consider the following 470-residue polypeptide: Argininosuccinate lyase (470 aa).

Belongs to the lyase 1 family. Argininosuccinate lyase subfamily.

It localises to the cytoplasm. It carries out the reaction 2-(N(omega)-L-arginino)succinate = fumarate + L-arginine. It functions in the pathway amino-acid biosynthesis; L-arginine biosynthesis; L-arginine from L-ornithine and carbamoyl phosphate: step 3/3. This Mycobacterium sp. (strain JLS) protein is Argininosuccinate lyase.